A 446-amino-acid polypeptide reads, in one-letter code: Delta(8)-fatty-acid desaturase (446 aa).

The 85-residue stretch at Lys5–Ser89 folds into the Cytochrome b5 heme-binding domain. His40 and His63 together coordinate heme. The next 2 membrane-spanning stretches (helical) occupy residues Val112 to Cys132 and Leu136 to Leu156. Residues His158–His162 carry the Histidine box-1 motif. The next 4 helical transmembrane spans lie at Phe174–His195, Ile253–Phe273, Ala282–Leu302, and Val309–Asn329. Residues His195 to His199 carry the Histidine box-2 motif. Positions Gln372 to His376 match the Histidine box-3 motif.

This sequence belongs to the fatty acid desaturase type 1 family. It depends on Fe cation as a cofactor. In terms of tissue distribution, expressed only in young leaves.

The protein resides in the membrane. It catalyses the reaction an N-acyl-(4R)-4-hydroxysphinganine + 2 Fe(II)-[cytochrome b5] + O2 + 2 H(+) = a (4R,8E)-4-hydroxysphingenine ceramide + 2 Fe(III)-[cytochrome b5] + 2 H2O. The catalysed reaction is an N-acyl-(4R)-4-hydroxysphinganine + 2 Fe(II)-[cytochrome b5] + O2 + 2 H(+) = a (4R,8Z)-4-hydroxysphing-8-enine ceramide + 2 Fe(III)-[cytochrome b5] + 2 H2O. Functionally, plays a major role as delta(8)-fatty-acid desaturase which introduces a double bond at the 8-position in the long-chain base (LCB) of ceramides with or without a hydroxy group at the 4-position. The enzyme produces both the 8E and 8Z isomers (in a 4:1 ratio). This structural modification contributes to the quantitative partitioning of ceramides between the two major sphingolipid classes, glucosylceramides and glycosylinositolphosphoryl ceramides. Sphingolipids are important membrane components involved in environmental stress responses, such as resistance to chilling, and act as cell signaling molecules. This chain is Delta(8)-fatty-acid desaturase (sld1), found in Borago officinalis (Bourrache).